The sequence spans 119 residues: Beta-2-microglobulin (119 aa).

The N-terminal stretch at 1 to 20 (MFRSVALAVLALLFLSGLEA) is a signal peptide. The Ig-like C1-type domain maps to 25 to 114 (PKIQVYSRHP…VTLSGPRTVK (90 aa)). Cysteine 45 and cysteine 100 are joined by a disulfide.

The protein belongs to the beta-2-microglobulin family. Heterodimer of an alpha chain and a beta chain. Beta-2-microglobulin is the beta-chain of major histocompatibility complex class I molecules.

It localises to the secreted. Component of the class I major histocompatibility complex (MHC). Involved in the presentation of peptide antigens to the immune system. This Chlorocebus aethiops (Green monkey) protein is Beta-2-microglobulin (B2M).